Here is a 105-residue protein sequence, read N- to C-terminus: Thioredoxin (105 aa).

The Thioredoxin domain maps to valine 2 to methionine 105. Residues cysteine 32 and cysteine 35 each act as nucleophile in the active site. The cysteines at positions 32 and 35 are disulfide-linked. S-nitrosocysteine is present on residues cysteine 69 and cysteine 73.

It belongs to the thioredoxin family. Post-translationally, may be nitrosylated on several cysteine residues, depending on the oxidation state. Nitrosylated Cys-73 may serve as donor for nitrosylation of target proteins.

Its subcellular location is the nucleus. It is found in the cytoplasm. The protein resides in the secreted. Its function is as follows. Participates in various redox reactions through the reversible oxidation of its active center dithiol to a disulfide and catalyzes dithiol-disulfide exchange reactions. Plays a role in the reversible S-nitrosylation of cysteine residues in target proteins, and thereby contributes to the response to intracellular nitric oxide. Nitrosylates the active site Cys of CASP3 in response to nitric oxide (NO), and thereby inhibits caspase-3 activity. Induces the FOS/JUN AP-1 DNA binding activity in ionizing radiation (IR) cells through its oxidation/reduction status and stimulates AP-1 transcriptional activity. This is Thioredoxin (TXN) from Ophiophagus hannah (King cobra).